Reading from the N-terminus, the 311-residue chain is Protoheme IX farnesyltransferase (311 aa).

A run of 8 helical transmembrane segments spans residues 30–50 (VVQLIVFCAAIGMLLAVPGWP), 55–75 (WGVALAASIGIWLVASAAAAF), 108–128 (FAVLLCAAGMAVLWVWVNALT), 129–149 (MWLTFATFVGYAVIYTVLLKP), 153–173 (QNIVIGGASGAMPPVLGWAAM), 182–202 (WILCLIIFLWTPPHFWALALY), 233–253 (FVLFAATLLPFVYGMSGWFYL), and 287–307 (IWHLSLLFAALLLDHYLGPLL).

This sequence belongs to the UbiA prenyltransferase family. Protoheme IX farnesyltransferase subfamily.

The protein resides in the cell inner membrane. The catalysed reaction is heme b + (2E,6E)-farnesyl diphosphate + H2O = Fe(II)-heme o + diphosphate. Its pathway is porphyrin-containing compound metabolism; heme O biosynthesis; heme O from protoheme: step 1/1. Functionally, converts heme B (protoheme IX) to heme O by substitution of the vinyl group on carbon 2 of heme B porphyrin ring with a hydroxyethyl farnesyl side group. In Methylibium petroleiphilum (strain ATCC BAA-1232 / LMG 22953 / PM1), this protein is Protoheme IX farnesyltransferase.